An 877-amino-acid chain; its full sequence is Probable alpha/beta-glucosidase agdC (877 aa).

The first 14 residues, 1–14 (MLGSLLLLAPLAGA), serve as a signal peptide directing secretion. N-linked (GlcNAc...) asparagine glycosylation is found at Asn-171, Asn-293, and Asn-373. The active-site Nucleophile is Asp-422. Glu-425 is a catalytic residue. The disordered stretch occupies residues 432–476 (DPCTDPERYSSENNLPPAPPPVRSSSPRPLPGFPADFQPSSASRS). The span at 447–463 (PPAPPPVRSSSPRPLPG) shows a compositional bias: pro residues. Asn-508 carries N-linked (GlcNAc...) asparagine glycosylation. Residue Asp-573 is the Proton donor of the active site. N-linked (GlcNAc...) asparagine glycosylation is found at Asn-574, Asn-610, and Asn-744.

This sequence belongs to the glycosyl hydrolase 31 family.

The protein resides in the secreted. It carries out the reaction Hydrolysis of terminal, non-reducing (1-&gt;4)-linked alpha-D-glucose residues with release of alpha-D-glucose.. The catalysed reaction is Hydrolysis of terminal, non-reducing beta-D-glucosyl residues with release of beta-D-glucose.. Functionally, glucosidase involved in the degradation of cellulosic biomass. Has both alpha- and beta-glucosidase activity. The protein is Probable alpha/beta-glucosidase agdC (agdC) of Aspergillus oryzae (strain ATCC 42149 / RIB 40) (Yellow koji mold).